The primary structure comprises 363 residues: UDP-N-acetylglucosamine--N-acetylmuramyl-(pentapeptide) pyrophosphoryl-undecaprenol N-acetylglucosamine transferase (363 aa).

Residues 12–14 (TAG), Arg166, Ser196, and Gln291 contribute to the UDP-N-acetyl-alpha-D-glucosamine site.

The protein belongs to the glycosyltransferase 28 family. MurG subfamily.

It localises to the cell inner membrane. It catalyses the reaction di-trans,octa-cis-undecaprenyl diphospho-N-acetyl-alpha-D-muramoyl-L-alanyl-D-glutamyl-meso-2,6-diaminopimeloyl-D-alanyl-D-alanine + UDP-N-acetyl-alpha-D-glucosamine = di-trans,octa-cis-undecaprenyl diphospho-[N-acetyl-alpha-D-glucosaminyl-(1-&gt;4)]-N-acetyl-alpha-D-muramoyl-L-alanyl-D-glutamyl-meso-2,6-diaminopimeloyl-D-alanyl-D-alanine + UDP + H(+). Its pathway is cell wall biogenesis; peptidoglycan biosynthesis. Its function is as follows. Cell wall formation. Catalyzes the transfer of a GlcNAc subunit on undecaprenyl-pyrophosphoryl-MurNAc-pentapeptide (lipid intermediate I) to form undecaprenyl-pyrophosphoryl-MurNAc-(pentapeptide)GlcNAc (lipid intermediate II). The protein is UDP-N-acetylglucosamine--N-acetylmuramyl-(pentapeptide) pyrophosphoryl-undecaprenol N-acetylglucosamine transferase of Legionella pneumophila (strain Lens).